The chain runs to 232 residues: Ubiquinone biosynthesis O-methyltransferase (232 aa).

S-adenosyl-L-methionine-binding residues include Arg-36, Gly-55, Asp-76, and Leu-120.

The protein belongs to the methyltransferase superfamily. UbiG/COQ3 family.

It catalyses the reaction a 3-demethylubiquinol + S-adenosyl-L-methionine = a ubiquinol + S-adenosyl-L-homocysteine + H(+). It carries out the reaction a 3-(all-trans-polyprenyl)benzene-1,2-diol + S-adenosyl-L-methionine = a 2-methoxy-6-(all-trans-polyprenyl)phenol + S-adenosyl-L-homocysteine + H(+). Its pathway is cofactor biosynthesis; ubiquinone biosynthesis. In terms of biological role, O-methyltransferase that catalyzes the 2 O-methylation steps in the ubiquinone biosynthetic pathway. The polypeptide is Ubiquinone biosynthesis O-methyltransferase (Pseudomonas paraeruginosa (strain DSM 24068 / PA7) (Pseudomonas aeruginosa (strain PA7))).